The primary structure comprises 130 residues: uncharacterized protein (130 aa).

The helical transmembrane segment at 15–31 threads the bilayer; the sequence is LYLCPAIIRLSSVCTLA.

The protein localises to the membrane. This is an uncharacterized protein from Saccharomyces cerevisiae (strain ATCC 204508 / S288c) (Baker's yeast).